Reading from the N-terminus, the 323-residue chain is Malate dehydrogenase (323 aa).

NAD(+) is bound by residues 20 to 25 and aspartate 44; that span reads GAGRVG. Substrate contacts are provided by arginine 93 and arginine 99. Residues asparagine 106 and 129-131 each bind NAD(+); that span reads VTN. Residues asparagine 131 and arginine 162 each coordinate substrate. Histidine 186 serves as the catalytic Proton acceptor.

This sequence belongs to the LDH/MDH superfamily. MDH type 3 family.

The catalysed reaction is (S)-malate + NAD(+) = oxaloacetate + NADH + H(+). Catalyzes the reversible oxidation of malate to oxaloacetate. The chain is Malate dehydrogenase from Nostoc sp. (strain PCC 7120 / SAG 25.82 / UTEX 2576).